Reading from the N-terminus, the 279-residue chain is BEN domain-containing protein 6 (279 aa).

Positions 1–15 (MQKIVQTDEITNTQA) are enriched in polar residues. Disordered regions lie at residues 1 to 65 (MQKI…LAEL) and 134 to 172 (RATNNSSPDSFASTCSNSNSNSSSPVSLKPEEEHQTDEK). Residues 62–99 (LAELSKEELCAKIKSLKEKLTNTRKENSRLRQSLVMLQ) are a coiled coil. Polar residues predominate over residues 134–148 (RATNNSSPDSFASTC). A compositionally biased stretch (basic and acidic residues) spans 162–172 (KPEEEHQTDEK). A BEN domain is found at 171–271 (EKQFQIEKWQ…NCTKKPNLSK (101 aa)).

In terms of assembly, interacts (via BEN domain) with RBPJ.

The protein localises to the nucleus. Acts as a corepressor of recombining binding protein suppressor hairless (RBPJ) and inhibits Notch signaling in neural stem cells, thereby opposing their self-renewal and promoting neurogenesis. The sequence is that of BEN domain-containing protein 6 (BEND6) from Homo sapiens (Human).